The sequence spans 428 residues: Trigger factor (428 aa).

A PPIase FKBP-type domain is found at 163–248 (KDIVTIDFEG…VKEIKAKELP (86 aa)).

Belongs to the FKBP-type PPIase family. Tig subfamily.

The protein localises to the cytoplasm. The enzyme catalyses [protein]-peptidylproline (omega=180) = [protein]-peptidylproline (omega=0). Its function is as follows. Involved in protein export. Acts as a chaperone by maintaining the newly synthesized protein in an open conformation. Functions as a peptidyl-prolyl cis-trans isomerase. The sequence is that of Trigger factor from Lachnoclostridium phytofermentans (strain ATCC 700394 / DSM 18823 / ISDg) (Clostridium phytofermentans).